The primary structure comprises 623 residues: Putative ABC transporter ATP-binding protein MG014 (623 aa).

Residues 16-325 form the ABC transmembrane type-1 domain; sequence LILAPFFTFA…YIVLGFILTS (310 aa). Helical transmembrane passes span 27 to 47, 81 to 101, 157 to 177, 181 to 201, 266 to 286, and 307 to 327; these read IVID…VFSI, VLAT…LISI, FLRL…FAVT, DMSI…GILN, NIPF…LLVF, and IFAF…TSLT. One can recognise an ABC transporter domain in the interval 365 to 611; sequence LEFRNISFGL…CSLYQKMKES (247 aa). 400–407 is a binding site for ATP; that stretch reads GPTGSGKS.

It belongs to the ABC transporter superfamily.

It localises to the cell membrane. The protein is Putative ABC transporter ATP-binding protein MG014 of Mycoplasma genitalium (strain ATCC 33530 / DSM 19775 / NCTC 10195 / G37) (Mycoplasmoides genitalium).